Consider the following 468-residue polypeptide: uncharacterized protein (468 aa).

The interval 447–468 (AVHVSNGDKPKVALPDTQLGSH) is disordered.

The protein belongs to the mycobacterial PPE family.

This is an uncharacterized protein from Mycobacterium tuberculosis (strain ATCC 25618 / H37Rv).